The chain runs to 515 residues: Meiotically up-regulated gene 68 protein (515 aa).

Positions 165 to 204 are disordered; sequence LHSIESERNESSLSLDSGESEKKSEEDNGNGEQNYIPEQY.

In terms of biological role, has a role in meiosis. The protein is Meiotically up-regulated gene 68 protein (mug68) of Schizosaccharomyces pombe (strain 972 / ATCC 24843) (Fission yeast).